The following is a 411-amino-acid chain: MPVDELKRQLEIIKRGVAEIVPEEELVEKLKKSLNEGKPLRVKLGLDPTAPDIHLGHTVVLQKLKQFQSLGHEVIIIIGDFTAQIGDPTGKKETRKQLSWEEVLENAKTYQEQIFKILDPAKTKMVFNSEWLAKLTFADVIKLASKYTVARMLEREDFAKRFKEGQPISIHEFFYPLMQGYDSVALKADIELGGTDQKFNLLMGRTLQKEYGQEPQIAIMMPILEGTDGVQKMSKSLGNYIGINETPQEMFGKIMSIPDTLILRYLELLTSVPMETINEMKIQMETGVLNPRDAKVFLAKEIITQYHSREAADEAEREFIKIFREKELPDEIPEYKVPGELIDGGVVLLPKVLFSAGTVKSISEAKRLISQGAVLVNQEKINDINFVLKPSKEPYTVKVGKRRFLKIIFEK.

A 'HIGH' region motif is present at residues 48 to 57; it reads PTAPDIHLGH. The short motif at 232–236 is the 'KMSKS' region element; sequence KMSKS. K235 is a binding site for ATP. One can recognise an S4 RNA-binding domain in the interval 347–409; sequence VLLPKVLFSA…GKRRFLKIIF (63 aa).

The protein belongs to the class-I aminoacyl-tRNA synthetase family. TyrS type 2 subfamily. In terms of assembly, homodimer.

Its subcellular location is the cytoplasm. It catalyses the reaction tRNA(Tyr) + L-tyrosine + ATP = L-tyrosyl-tRNA(Tyr) + AMP + diphosphate + H(+). Catalyzes the attachment of tyrosine to tRNA(Tyr) in a two-step reaction: tyrosine is first activated by ATP to form Tyr-AMP and then transferred to the acceptor end of tRNA(Tyr). The polypeptide is Tyrosine--tRNA ligase (Carboxydothermus hydrogenoformans (strain ATCC BAA-161 / DSM 6008 / Z-2901)).